The chain runs to 622 residues: Leucine-rich repeat-containing protein 70 (622 aa).

The signal sequence occupies residues 1–31 (MCGLQFSLPCLRLFLVVTCYLLLLLHKEILG). Residues 32–60 (CSSVCQLCTGRQINCRNLGLSSIPKNFPE) enclose the LRRNT domain. LRR repeat units follow at residues 61-82 (STVF…ELTG), 85-106 (SLVA…AFVQ), 109-130 (HLYF…IFKG), 133-154 (NLRN…VFND), 157-178 (SVQY…TFVG), 181-202 (ALRI…GFQH), 205-226 (NLAC…AFEV), 229-250 (SLRR…AFKG), 253-274 (NLEY…GFSG), 277-298 (NLKH…TFSL), 301-322 (NLIY…TFEN), and 326-347 (SLKI…VLKP). A glycan (N-linked (GlcNAc...) asparagine) is linked at Asn215. Asn266 is a glycosylation site (N-linked (GlcNAc...) asparagine). 2 N-linked (GlcNAc...) asparagine glycosylation sites follow: Asn331 and Asn400. The region spanning 359–406 (NPWECNCKLLGLRDWLASSAITLNIYCQNPPSMRGRALRYINITNCVT) is the LRRCT domain. A helical transmembrane segment spans residues 527–547 (AFDILLAFFILACVLIIFLIY).

Expressed at low levels in many tissues, including smooth muscle, brain, uterus, pancreas, cartilage, adipose, spleen and testis.

The protein localises to the membrane. In terms of biological role, renders cells highly sensitive to the activation by cytokines and lipopolysaccharide (LPS). This chain is Leucine-rich repeat-containing protein 70 (LRRC70), found in Homo sapiens (Human).